The sequence spans 739 residues: Polyphosphate kinase (739 aa).

Residues 22-45 (WHSDNSALAAPPAATTSASQDQLP) form a disordered region. Positions 27–40 (SALAAPPAATTSAS) are enriched in low complexity. Residue Asn-87 coordinates ATP. Mg(2+)-binding residues include Arg-428 and Arg-458. Residue His-488 is the Phosphohistidine intermediate of the active site. The ATP site is built by Tyr-521, Arg-621, and His-649. Residues 714 to 739 (QWTASPQKGQQVRDHQESLMERHRSR) are disordered. Residues 724–739 (QVRDHQESLMERHRSR) show a composition bias toward basic and acidic residues.

Belongs to the polyphosphate kinase 1 (PPK1) family. Mg(2+) is required as a cofactor. An intermediate of this reaction is the autophosphorylated ppk in which a phosphate is covalently linked to a histidine residue through a N-P bond.

It carries out the reaction [phosphate](n) + ATP = [phosphate](n+1) + ADP. In terms of biological role, catalyzes the reversible transfer of the terminal phosphate of ATP to form a long-chain polyphosphate (polyP). This is Polyphosphate kinase from Mycobacterium leprae (strain TN).